The following is a 1115-amino-acid chain: Scavenger receptor cysteine-rich type 1 protein M130 (1115 aa).

Residues 1 to 46 form the signal peptide; that stretch reads MDKLRMVLHENSGSADFRRCSAHLSSFTFAVVAVLSACLVTSSLGG. Residues 47-1044 lie on the Extracellular side of the membrane; the sequence is KDKELRLTGG…ESLHATGRSS (998 aa). SRCR domains lie at 51-151, 158-258, 265-365, 372-472, 477-577, 582-682, 718-818, 823-925, and 928-1028; these read LRLT…VTCS, MGLV…VICL, LRVV…VTCS, LRLK…ITCS, PRLV…VVCS, IRLV…VICS, LRLV…VICS, LRLI…ITCA, and IRLQ…VTCS. Disulfide bonds link Cys-76–Cys-140, Cys-89–Cys-150, Cys-120–Cys-130, Cys-183–Cys-247, Cys-196–Cys-257, Cys-227–Cys-237, Cys-290–Cys-354, Cys-303–Cys-364, Cys-334–Cys-344, Cys-397–Cys-461, Cys-410–Cys-471, Cys-441–Cys-451, Cys-502–Cys-566, Cys-515–Cys-576, Cys-546–Cys-556, Cys-607–Cys-671, Cys-620–Cys-681, Cys-651–Cys-661, Cys-743–Cys-807, Cys-756–Cys-817, Cys-787–Cys-797, Cys-863–Cys-924, and Cys-894–Cys-904. N-linked (GlcNAc...) asparagine glycosylation is present at Asn-105. Asn-139 is a glycosylation site (N-linked (GlcNAc...) asparagine). Asn-936 carries N-linked (GlcNAc...) asparagine glycosylation. 3 disulfide bridges follow: Cys-953–Cys-1017, Cys-966–Cys-1027, and Cys-997–Cys-1007. The helical transmembrane segment at 1045-1065 threads the bilayer; it reads FVALAIFGVILLACLIAFLIW. Topologically, residues 1066–1115 are cytoplasmic; it reads TQKRRQRQRLSVFSGGENSVHQIQYREMNSCLKADETDMLNPSGDHSEVQ. Positions 1090-1093 match the Internalization signal motif; that stretch reads YREM.

As to quaternary structure, interacts with CSNK2B. Post-translationally, a soluble form (sCD163) is produced by proteolytic shedding which can be induced by lipopolysaccharide, phorbol ester and Fc region of immunoglobulin gamma. This cleavage is dependent on protein kinase C and tyrosine kinases and can be blocked by protease inhibitors. The shedding is inhibited by the tissue inhibitor of metalloproteinase TIMP3, and thus probably induced by membrane-bound metalloproteinases ADAMs. In terms of processing, phosphorylated. As to expression, expressed in monocytes and macrophages. Detected only in one population of monocytes (CD163+) which is in advanced maturation stage.

It is found in the secreted. It localises to the cell membrane. In terms of biological role, involved in clearance and endocytosis of hemoglobin/haptoglobin complexes by macrophages and may thereby protect tissues from free hemoglobin-mediated oxidative damage. May play a role in the uptake and recycling of iron, via endocytosis of hemoglobin/haptoglobin and subsequent breakdown of heme. Binds hemoglobin/haptoglobin complexes in a calcium-dependent and pH-dependent manner. Induces a cascade of intracellular signals that involves tyrosine kinase-dependent calcium mobilization, inositol triphosphate production and secretion of IL6 and CSF1. May play a role in the process of infection of porcine monocytes/macrophages by African swine fever virus (ASFV). In case of porcine reproductive and respiratory syndrome virus (PRRSV), serves mediates virion attachment and plays a role in viral entry. Its function is as follows. After shedding, the soluble form (sCD163) may play an anti-inflammatory role. This is Scavenger receptor cysteine-rich type 1 protein M130 (CD163) from Sus scrofa (Pig).